The sequence spans 692 residues: DNA topoisomerase 4 subunit B (692 aa).

Residues tyrosine 53, asparagine 93, aspartate 120, 162–168 (GLHGVGI), and lysine 393 contribute to the ATP site. The region spanning 473 to 587 (AELFIVEGDS…AGHLYLAVPP (115 aa)) is the Toprim domain. 3 residues coordinate Mg(2+): glutamate 479, aspartate 552, and aspartate 554.

Belongs to the type II topoisomerase family. ParE type 1 subfamily. In terms of assembly, heterotetramer composed of ParC and ParE. The cofactor is Mg(2+). Mn(2+) is required as a cofactor. It depends on Ca(2+) as a cofactor.

It catalyses the reaction ATP-dependent breakage, passage and rejoining of double-stranded DNA.. Topoisomerase IV is essential for chromosome segregation. It relaxes supercoiled DNA. Performs the decatenation events required during the replication of a circular DNA molecule. This is DNA topoisomerase 4 subunit B from Bartonella bacilliformis (strain ATCC 35685 / KC583 / Herrer 020/F12,63).